A 102-amino-acid polypeptide reads, in one-letter code: Small ribosomal subunit protein eS24 (102 aa).

It belongs to the eukaryotic ribosomal protein eS24 family.

This chain is Small ribosomal subunit protein eS24, found in Halorubrum lacusprofundi (strain ATCC 49239 / DSM 5036 / JCM 8891 / ACAM 34).